Here is a 577-residue protein sequence, read N- to C-terminus: MGITYLHISVATTALSFVGLQVWTELSLDRLRADGIITKNISLGNSENTLELLLSSHTTIALLASFVLNIYILLVLSLKTLFFGDLYAIETRKLVERLANYIIYKGTFLPFVVPRTVFQGVLWTIWLTVLCTLKMFQALARDRLDRLNASPSSTPWTYFRVYSALFMVLSTDLCWIKLSLMIYNTVGSSVYLLLLFEPCGIAFETLQALLIHGFQLLDMWINHLAVKNSDCQRSKFYDSMTAGSLLEWKGLLNRNLGFFLDMATLVMALGHYLHIWWLHGMAFHLVDAVLFLNIRALLSSILKRIKGYIKLRVALGALHAALLDATSEELRDYDDECAICREPMAKAKRLHCNHLFHLGCLRSWLDQGLNEVYSCPTCRKPLFVGRTESEANPSRGEVSSDEHLARQFERQNNSVHALTTGMFPTETPNFTESDPWRNSEVDPSWLQTWSDQGVDVVGSSAGSRSVGLGQVQLMMRHLASVGEGSAQTTLDDASWGLWPMNPSQASTSSTYVPPGAGGRTGGLHLRTVSRAANNMASILAMAETVREVLPHVPDEIIFQDLQRTNSVSVTVNNLLQM.

6 consecutive transmembrane segments (helical) span residues 3–23 (ITYLHISVATTALSFVGLQVW), 58–78 (TTIALLASFVLNIYILLVLSL), 120–140 (GVLWTIWLTVLCTLKMFQALA), 162–182 (YSALFMVLSTDLCWIKLSLMI), 191–211 (YLLLLFEPCGIAFETLQALLI), and 272–292 (YLHIWWLHGMAFHLVDAVLFL). Residues 337 to 379 (CAICREPMAKAKRLHCNHLFHLGCLRSWLDQGLNEVYSCPTCR) form an RING-type; atypical zinc finger. One can recognise a CUE domain in the interval 537 to 577 (SILAMAETVREVLPHVPDEIIFQDLQRTNSVSVTVNNLLQM).

Interacts (via C-terminus) with RPM1 (via N-terminus).

It is found in the membrane. The catalysed reaction is S-ubiquitinyl-[E2 ubiquitin-conjugating enzyme]-L-cysteine + [acceptor protein]-L-lysine = [E2 ubiquitin-conjugating enzyme]-L-cysteine + N(6)-ubiquitinyl-[acceptor protein]-L-lysine.. It functions in the pathway protein modification; protein ubiquitination. In terms of biological role, E3 ubiquitin protein ligase that acts as a positive regulator of RPM1- and RPS2-dependent hypersensitive response (HR), in association with RIN2. Probably not required for RPM1 degradation during HR. This is E3 ubiquitin protein ligase RIN3 (RIN3) from Arabidopsis thaliana (Mouse-ear cress).